Reading from the N-terminus, the 254-residue chain is Phosphonates import ATP-binding protein PhnC (254 aa).

An ABC transporter domain is found at 2–246 (IQLKNVSKIY…VFDDIYNGGN (245 aa)). 35-42 (GLSGAGKS) contacts ATP.

This sequence belongs to the ABC transporter superfamily. Phosphonates importer (TC 3.A.1.9.1) family. The complex is composed of two ATP-binding proteins (PhnC), two transmembrane proteins (PhnE) and a solute-binding protein (PhnD).

It is found in the cell membrane. The catalysed reaction is phosphonate(out) + ATP + H2O = phosphonate(in) + ADP + phosphate + H(+). Functionally, part of the ABC transporter complex PhnCDE involved in phosphonates import. Responsible for energy coupling to the transport system. In Lactobacillus johnsonii (strain CNCM I-12250 / La1 / NCC 533), this protein is Phosphonates import ATP-binding protein PhnC.